We begin with the raw amino-acid sequence, 247 residues long: Phosphatidylserine decarboxylase proenzyme (247 aa).

Residue Ser-206 is the Schiff-base intermediate with substrate; via pyruvic acid of the active site. A Pyruvic acid (Ser); by autocatalysis modification is found at Ser-206.

The protein belongs to the phosphatidylserine decarboxylase family. PSD-A subfamily. In terms of assembly, heterodimer of a large membrane-associated beta subunit and a small pyruvoyl-containing alpha subunit. It depends on pyruvate as a cofactor. Is synthesized initially as an inactive proenzyme. Formation of the active enzyme involves a self-maturation process in which the active site pyruvoyl group is generated from an internal serine residue via an autocatalytic post-translational modification. Two non-identical subunits are generated from the proenzyme in this reaction, and the pyruvate is formed at the N-terminus of the alpha chain, which is derived from the carboxyl end of the proenzyme. The post-translation cleavage follows an unusual pathway, termed non-hydrolytic serinolysis, in which the side chain hydroxyl group of the serine supplies its oxygen atom to form the C-terminus of the beta chain, while the remainder of the serine residue undergoes an oxidative deamination to produce ammonia and the pyruvoyl prosthetic group on the alpha chain.

It is found in the cell membrane. It catalyses the reaction a 1,2-diacyl-sn-glycero-3-phospho-L-serine + H(+) = a 1,2-diacyl-sn-glycero-3-phosphoethanolamine + CO2. It participates in phospholipid metabolism; phosphatidylethanolamine biosynthesis; phosphatidylethanolamine from CDP-diacylglycerol: step 2/2. Catalyzes the formation of phosphatidylethanolamine (PtdEtn) from phosphatidylserine (PtdSer). The sequence is that of Phosphatidylserine decarboxylase proenzyme from Nitrobacter winogradskyi (strain ATCC 25391 / DSM 10237 / CIP 104748 / NCIMB 11846 / Nb-255).